The chain runs to 229 residues: Cytidylate kinase (229 aa).

Residue 12 to 20 (GPSGAGKGT) coordinates ATP.

This sequence belongs to the cytidylate kinase family. Type 1 subfamily.

Its subcellular location is the cytoplasm. The catalysed reaction is CMP + ATP = CDP + ADP. It catalyses the reaction dCMP + ATP = dCDP + ADP. In Pseudomonas paraeruginosa (strain DSM 24068 / PA7) (Pseudomonas aeruginosa (strain PA7)), this protein is Cytidylate kinase.